We begin with the raw amino-acid sequence, 271 residues long: MARELLFLACAIVIADSWPAKAIDIESLFGHTIRIEGEYPERTLKVDDRELHRNALLLFDGLFIVDGVPALIGSSSNGGNACDGTPFVVSFPPGARPRFDGPIEACAYIGHEVSDERILFSTNNIPGQGREQWAWTPADGMKELGVAAFVPDDKSGWQALRERSFEHPSDALKNADIAATIKSLLGADFEAFQAIITGTGSGEFKSDDYIGRTCTPHMCREQEALLFLSAKDRRAYAAWKPHQKKIIVHPPVKQWPEKAKQELRAWAETWK.

A signal peptide spans 1 to 22; sequence MARELLFLACAIVIADSWPAKA.

This is an uncharacterized protein from Sinorhizobium fredii (strain NBRC 101917 / NGR234).